A 187-amino-acid chain; its full sequence is Methylamine dehydrogenase light chain (187 aa).

The segment at residues Met-1–Gln-57 is a signal peptide (tat-type signal). 6 cysteine pairs are disulfide-bonded: Cys-79–Cys-144, Cys-85–Cys-117, Cys-92–Cys-177, Cys-94–Cys-142, Cys-102–Cys-133, and Cys-134–Cys-165. Position 113 is a tryptophylquinone (Trp-113). Positions Trp-113 to Trp-164 form a cross-link, tryptophan tryptophylquinone (Trp-Trp).

The protein belongs to the aromatic amine dehydrogenase light chain family. Heterotetramer of two light and two heavy chains. The cofactor is tryptophan tryptophylquinone residue. Post-translationally, predicted to be exported by the Tat system. The position of the signal peptide cleavage has not been experimentally proven. In terms of processing, tryptophan tryptophylquinone (TTQ) is formed by oxidation of the indole ring of a tryptophan to form tryptophylquinone followed by covalent cross-linking with another tryptophan residue.

The protein resides in the periplasm. It carries out the reaction 2 oxidized [amicyanin] + methylamine + H2O = 2 reduced [amicyanin] + formaldehyde + NH4(+) + 2 H(+). The protein operates within one-carbon metabolism; methylamine degradation; formaldehyde from methylamine: step 1/1. In terms of biological role, methylamine dehydrogenase carries out the oxidation of methylamine. Electrons are passed from methylamine dehydrogenase to amicyanin. The sequence is that of Methylamine dehydrogenase light chain (mauA) from Methylophilus methylotrophus (Bacterium W3A1).